The chain runs to 1946 residues: MRGPLGTEEELPRLFAEEMENEEEMSEEEDGGLEGFEDFFPAEPVSLPKKKPKKLKESKSSKGKRKKKEGSNDEMSDNEEDLEEKSESEGSDYSPTKKKKKKLKEKKEKKEKKEKRKKRGEDEDDNDDGGLKEPKSSGQLMAEWGLDDVDYLFSEDDYHTLTNYKAFSQFLRPLIAKKNPKIPMSKMMTVLGAKWREFSANNPFKGSSAAAAAAAVAAAVETVTIAPPLAISPQQVPQTLPIRKAKTKEGKGPGVRKKNKGAKDSKKKGRGKRVAGLKFRFGGISKRKKGSSSEEDEREDSDLDNASIHSSSVRSECSAALGKKNKRRRKKKRIDDGDGYETDHQDYCEVCQQGGEIILCDTCPRAYHLVCLDPELEKAPEGKWSCPHCEKEGIQWEPKDDDEEEEEGGCEEEEDDHMEFCRVCKDGGELLCCDACPSSYHLHCLNPPLPEIPNGEWLCPRCTCPPLKGKVQRILHWRWTEPPAPFVVGLPGPEVEPGMPPPRPLEGIPEREFFVKWAGLSYWHCSWVKELQLELYHTVMYRNYQRKNDMDEPPPFDYGSGDEDGKSEKRKNKDPLYAKMEERFYRYGIKPEWMMVHRILNHSFDKKGDIHYLIKWKDLPYDQCTWEIDEIDIPYYDNLKQAYWGHRELMLGEDARLPKRLVKKGKKLKDDKQEKPPDTPIVDPTVKFDKQPWYIDATGGTLHPYQLEGLNWLRFSWAQGTDTILADEMGLGKTVQTIVFLYSLYKEGHSKGPYLVSAPLSTIINWEREFEMWAPDFYVVTYTGDKESRSVIRENEFSFEDNAIRGGKKVFRMKKEVQIKFHVLLTSYELITIDQAILGSIEWACLVVDEAHRLKNNQSKFFRVLNSYKIDYKLLLTGTPLQNNLEELFHLLNFLTPERFNNLEGFLEEFADISKEDQIKKLHDLLGPHMLRRLKADVFKNMPAKTELIVRVELSQMQKKYYKFILTRNFEALNSKGGGNQVSLLNIMMDLKKCCNHPYLFPVAAVEAPVLPNGSYDGSSLVKSSGKLMLLQKMLKKLRDEGHRVLIFSQMTKMLDLLEDFLEYEGYKYERIDGGITGGLRQEAIDRFNAPGAQQFCFLLSTRAGGLGINLATADTVIIYDSDWNPHNDIQAFSRAHRIGQNKKVMIYRFVTRASVEERITQVAKRKMMLTHLVVRPGLGSKSGSMTKQELDDILKFGTEELFKDDVEGMMSQGQRPTTPIPDIQSTKGGSLTAGAKKKHGSTPPGDNKDVEDSSVIHYDDAAISKLLDRNQDATDDTELQNMNEYLSSFKVAQYVVREEDGVEEVEREVIKQEENVDPDYWEKLLRHHYEQQQEDLARNLGKGKRIRKQVNYNDASQEDQEWQDELSDNQSEYSIGSEDEDEDFEERPEGQSGRRQSRRQLKSDRDKPLPPLLARVGGNIEVLGFNARQRKAFLNAIMRWGMPPQDAFNSHWLVRDLRGKSEKEFRAYVSLFMRHLCEPGADGAETFADGVPREGLSRQHVLTRIGVMSLVRKKVQEFEHVNGKYSTPDLVPEGAEGKKPGEVISSDPNTPVPASPAQLPPAPLGLTDKMEAQLGYTDEKESGMQKPKKSLEIQTLPTALDRVEGEDKHQSSDSKDRAREERTEEVEKAQGSPEQPLKEEVLPDKEPIPDKPELSLGHSGDFRPDDPKTEEKEPGETQQNGDREEDEEGKKEDKNGKFKFMFNIADGGFTELHTLWQNEERAAVSSGKIYEIWHRRHDYWLLAGIVTHGYARWQDIQNDPRYMILNEPFKSEIHKGNYLEMKNKFLARRFKLLEQALVIEEQLRRAAYLNMTQDPNHPAMALNARLAEVECLAESHQHLSKESLAGNKPANAVLHKVLNQLEELLSDMKADVTRLPSMLSRIPPVAARLQMSERSILSRLTNRAGDPTIQQTSSRRRDFPLFQRSFPAEPSHLPNPRGREKLQPF.

Disordered regions lie at residues 1 to 140 (MRGP…SGQL), 236 to 272 (VPQTLPIRKAKTKEGKGPGVRKKNKGAKDSKKKGRGK), and 285 to 340 (SKRK…GDGY). Composition is skewed to acidic residues over residues 17-37 (EEMENEEEMSEEEDGGLEGFE) and 72-90 (NDEMSDNEEDLEEKSESEG). 2 stretches are compositionally biased toward basic residues: residues 96–118 (TKKKKKKLKEKKEKKEKKEKRKK) and 254–272 (GVRKKNKGAKDSKKKGRGK). A compositionally biased stretch (acidic residues) spans 293–303 (SEEDEREDSDL). Residues 323–332 (KKNKRRRKKK) are compositionally biased toward basic residues. PHD-type zinc fingers lie at residues 345–392 (QDYC…CEKE) and 418–465 (MEFC…CTCP). Positions 345-655 (QDYCEVCQQG…HRELMLGEDA (311 aa)) are histone-binding. The 58-residue stretch at 499–556 (MPPPRPLEGIPEREFFVKWAGLSYWHCSWVKELQLELYHTVMYRNYQRKNDMDEPPPF) folds into the Chromo 1 domain. A disordered region spans residues 551–573 (DEPPPFDYGSGDEDGKSEKRKNK). A compositionally biased stretch (basic and acidic residues) spans 563-573 (EDGKSEKRKNK). In terms of domain architecture, Chromo 2 spans 594-655 (MMVHRILNHS…HRELMLGEDA (62 aa)). The Helicase ATP-binding domain maps to 714-898 (RFSWAQGTDT…FHLLNFLTPE (185 aa)). 727–734 (DEMGLGKT) serves as a coordination point for ATP. A DEAH box motif is present at residues 849–852 (DEAH). The 166-residue stretch at 1030-1195 (LLQKMLKKLR…MTKQELDDIL (166 aa)) folds into the Helicase C-terminal domain. Disordered regions lie at residues 1210 to 1254 (MMSQ…VEDS), 1353 to 1413 (YNDA…LPPL), 1525 to 1566 (KYST…APLG), 1579 to 1696 (DEKE…EDKN), and 1926 to 1946 (SFPAEPSHLPNPRGREKLQPF). Polar residues predominate over residues 1212–1230 (SQGQRPTTPIPDIQSTKGG). Composition is skewed to acidic residues over residues 1357–1368 (SQEDQEWQDELS) and 1378–1387 (SEDEDEDFEE). At Gln-1392 the chain carries N5-methylglutamine. Over residues 1551 to 1564 (TPVPASPAQLPPAP) the composition is skewed to pro residues. Ser-1556 carries the phosphoserine modification. Basic and acidic residues-rich tracts occupy residues 1602–1629 (DRVEGEDKHQSSDSKDRAREERTEEVEK), 1637–1654 (PLKEEVLPDKEPIPDKPE), and 1661–1676 (GDFRPDDPKTEEKEPG).

Belongs to the SNF2/RAD54 helicase family. As to quaternary structure, component of the nucleosome remodeling and deacetylase (NuRD) repressor complex, composed of core proteins MTA1, MTA2, MTA3, RBBP4, RBBP7, HDAC1, HDAC2, MBD2, MBD3, and peripherally associated proteins CDK2AP1, CDK2AP2, GATAD2A, GATAD2B, CHD3, CHD4 and CHD5. The exact stoichiometry of the NuRD complex is unknown, and some subunits such as MBD2 and MBD3, GATAD2A and GATAD2B, and CHD3, CHD4 and CHD5 define mutually exclusive NuRD complexes. Interacts with HDAC2. In terms of processing, methylated at Gln-1392 by N6AMT1. Specifically expressed by neurons in brain, retina and adrenal gland (at protein level). Also detected in testis.

It localises to the nucleus. It is found in the chromosome. The enzyme catalyses ATP + H2O = ADP + phosphate + H(+). In terms of biological role, ATP-dependent chromatin-remodeling factor that binds DNA through histones and regulates gene transcription. May specifically recognize and bind trimethylated 'Lys-27' (H3K27me3) and non-methylated 'Lys-4' of histone H3. Acts as a component of the histone deacetylase NuRD complex which participates in the remodeling of chromatin. Plays a role in the development of the nervous system by activating the expression of genes promoting neuron terminal differentiation. In parallel, it may also positively regulate the trimethylation of histone H3 at 'Lys-27' thereby specifically repressing genes that promote the differentiation into non-neuronal cell lineages. Regulates the expression of genes involved in cell proliferation and differentiation. Downstream activated genes may include CDKN2A that positively regulates the p53/TP53 pathway, which in turn, prevents cell proliferation. In spermatogenesis, it probably regulates histone hyperacetylation and the replacement of histones by transition proteins in chromatin, a crucial step in the condensation of spermatid chromatin and the production of functional spermatozoa. This chain is Chromodomain-helicase-DNA-binding protein 5 (Chd5), found in Mus musculus (Mouse).